Consider the following 1523-residue polypeptide: WD repeat-containing protein 62 (1523 aa).

A2 carries the post-translational modification N-acetylalanine. At S33 the chain carries Phosphoserine. Position 46 is a phosphothreonine (T46). 12 WD repeats span residues T109 to E150, G153 to S194, K196 to V234, I291 to N330, A357 to K396, E411 to W450, D490 to K529, A532 to Q574, D578 to H618, A626 to C665, G671 to G713, and H714 to M752. A Phosphoserine modification is found at S501. Positions Q762 to P824 are disordered. Polar residues predominate over residues P776 to R790. Residues Q797–E809 are compositionally biased toward acidic residues. The WD 13 repeat unit spans residues E803 to V846. Residues E810–P824 show a composition bias toward basic and acidic residues. 2 positions are modified to phosphoserine: S966 and S972. Residues V1000–T1072 are disordered. T1072 bears the Phosphothreonine mark. 3 positions are modified to phosphoserine: S1117, S1143, and S1169. A disordered region spans residues S1143–Q1258. 2 stretches are compositionally biased toward polar residues: residues Y1167 to S1177 and T1199 to P1213. A compositionally biased stretch (low complexity) spans S1214–S1225. A compositionally biased stretch (polar residues) spans H1226–L1235. A Phosphoserine modification is found at S1234.

Can form homodimers (via C-terminus). Interacts (via C-terminus) with MAPKBP1 (via C-terminus). Interacts with CDK5RAP2, CEP152, CEP63 and KIAA0753. CEP63, CDK5RAP2, CEP152, WDR62 are proposed to form a stepwise assembled complex at the centrosome forming a ring near parental centrioles. In terms of tissue distribution, prominent in neural crest lineages from 9.5 dpc to 11.5 dpc. Also expressed in the ventricular and subventricular zones during the period of cerebral cortical neurogenesis (11.5-16.5 dpc), with expression decreasing in intensity by 17.5 dpc. In the cerebellum, it is strongly expressed in precursors of granule neurons at late embryonic and early postnatal stages; by postnatal day 9 (P9). Present in fetal brain, enriched within the ventricular and subventricular zone (at protein level).

It is found in the nucleus. Its subcellular location is the cytoplasm. It localises to the cytoskeleton. The protein resides in the spindle pole. The protein localises to the microtubule organizing center. It is found in the centrosome. Its subcellular location is the centriole. Required for cerebral cortical development. Plays a role in neuronal proliferation and migration. Plays a role in mother-centriole-dependent centriole duplication; the function seems also to involve CEP152, CDK5RAP2 and CEP63 through a stepwise assembled complex at the centrosome that recruits CDK2 required for centriole duplication. The chain is WD repeat-containing protein 62 (Wdr62) from Mus musculus (Mouse).